The sequence spans 191 residues: Fe/S biogenesis protein NfuA (191 aa).

Positions 149 and 152 each coordinate [4Fe-4S] cluster.

It belongs to the NfuA family. In terms of assembly, homodimer. Requires [4Fe-4S] cluster as cofactor.

Its function is as follows. Involved in iron-sulfur cluster biogenesis. Binds a 4Fe-4S cluster, can transfer this cluster to apoproteins, and thereby intervenes in the maturation of Fe/S proteins. Could also act as a scaffold/chaperone for damaged Fe/S proteins. The chain is Fe/S biogenesis protein NfuA from Edwardsiella ictaluri (strain 93-146).